Reading from the N-terminus, the 164-residue chain is Cyclin-dependent kinase inhibitor 1 (164 aa).

Ser-2 bears the N-acetylserine mark. A Glycyl serine ester (Ser-Gly) (interchain with G-Cter in ubiquitin) cross-link involves residue Ser-2. The C4-type zinc finger occupies His-13–Cys-41. Residues Ala-17–Pro-24 form a required for binding cyclins region. Residues Phe-53–Pro-58 are required for binding CDKs. Residues Ala-80 to Pro-164 are disordered. At Ser-114 the chain carries Phosphoserine; by GSK3-beta. Ser-130 carries the phosphoserine modification. The PIP-box K+4 motif signature appears at Arg-140–Pro-164. A Nuclear localization signal motif is present at residues Lys-141–Arg-156. Phosphothreonine; by PKA, PKB/AKT1, PIM1 and PIM2 is present on Thr-145. Ser-146 bears the Phosphoserine; by PKC and NUAK1 mark. Positions His-152–Pro-164 are interaction with TRIM39. Over residues Ser-153 to Pro-164 the composition is skewed to basic residues. Position 160 is a phosphoserine (Ser-160).

This sequence belongs to the CDI family. In terms of assembly, interacts with HDAC1; the interaction is prevented by competitive binding of C10orf90/FATS to HDAC1 facilitating acetylation and protein stabilization of CDKN1A/p21. Interacts with MKRN1. Interacts with PSMA3. Interacts with PCNA. Component of the ternary complex, cyclin D-CDK4-CDKN1A. Interacts (via its N-terminal domain) with CDK4; the interaction promotes the assembly of the cyclin D-CDK4 complex, its nuclear translocation and promotes the cyclin D-dependent enzyme activity of CDK4. Binding to CDK2 leads to CDK2/cyclin E inactivation at the G1-S phase DNA damage checkpoint, thereby arresting cells at the G1-S transition during DNA repair. Interacts with PIM1. Interacts with STK11 and NUAK1. Interacts with DTL and TRIM39. Interacts with PKP3; the interaction sequesters CDKN1A to the cytoplasm thereby repressing its role as an inhibitor of CDK4- and CDK6-driven RB1 phosphorylation. Phosphorylation of Thr-145 by Akt or of Ser-146 by PKC impairs binding to PCNA. Phosphorylation at Ser-114 by GSK3-beta enhances ubiquitination by the DCX(DTL) complex. Phosphorylation of Thr-145 by PIM2 enhances protein stability and inhibits cell proliferation. Phosphorylation of Thr-145 by PIM1 results in the relocation of CDKN1A to the cytoplasm and enhanced CDKN1A protein stability. UV radiation-induced phosphorylation at Ser-146 by NUAK1 leads to its degradation. Post-translationally, ubiquitinated by MKRN1; leading to polyubiquitination and 26S proteasome-dependent degradation. Ubiquitinated by the DCX(DTL) complex, also named CRL4(CDT2) complex, leading to its degradation during S phase or following UV irradiation. Ubiquitination by the DCX(DTL) complex is essential to control replication licensing and is PCNA-dependent: interacts with PCNA via its PIP-box, while the presence of the containing the 'K+4' motif in the PIP box, recruit the DCX(DTL) complex, leading to its degradation. Ubiquitination at Ser-2 leads to degradation by the proteasome pathway. Ubiquitinated by RNF114; leading to proteasomal degradation. In terms of processing, acetylation leads to protein stability. Acetylated in vitro on Lys-141, Lys-154, Lys-161 and Lys-163. Deacetylation by HDAC1 is prevented by competitive binding of C10orf90/FATS to HDAC1.

Its subcellular location is the cytoplasm. The protein localises to the nucleus. Its function is as follows. May be involved in p53/TP53 mediated inhibition of cellular proliferation in response to DNA damage. Binds to and inhibits cyclin-dependent kinase activity, preventing phosphorylation of critical cyclin-dependent kinase substrates and blocking cell cycle progression. Functions in the nuclear localization and assembly of cyclin D-CDK4 complex and promotes its kinase activity towards RB1. At higher stoichiometric ratios, inhibits the kinase activity of the cyclin D-CDK4 complex. Inhibits DNA synthesis by DNA polymerase delta by competing with POLD3 for PCNA binding. Plays an important role in controlling cell cycle progression and DNA damage-induced G2 arrest. Negatively regulates the CDK4- and CDK6-driven phosphorylation of RB1 in keratinocytes, thereby resulting in the release of E2F1 and subsequent transcription of E2F1-driven G1/S phase promoting genes. This chain is Cyclin-dependent kinase inhibitor 1 (CDKN1A), found in Felis catus (Cat).